Consider the following 66-residue polypeptide: ATP synthase F(0) complex subunit 8 (66 aa).

Residues 8–24 (IWLLAVVIVLTTLMIFL) form a helical membrane-spanning segment. Position 54 is an N6-acetyllysine; alternate (Lys54). An N6-succinyllysine; alternate modification is found at Lys54. An N6-acetyllysine modification is found at Lys57.

Belongs to the ATPase protein 8 family. Component of the ATP synthase complex composed at least of ATP5F1A/subunit alpha, ATP5F1B/subunit beta, ATP5MC1/subunit c (homooctomer), MT-ATP6/subunit a, MT-ATP8/subunit 8, ATP5ME/subunit e, ATP5MF/subunit f, ATP5MG/subunit g, ATP5MK/subunit k, ATP5MJ/subunit j, ATP5F1C/subunit gamma, ATP5F1D/subunit delta, ATP5F1E/subunit epsilon, ATP5PF/subunit F6, ATP5PB/subunit b, ATP5PD/subunit d, ATP5PO/subunit OSCP. ATP synthase complex consists of a soluble F(1) head domain (subunits alpha(3) and beta(3)) - the catalytic core - and a membrane F(0) domain - the membrane proton channel (subunits c, a, 8, e, f, g, k and j). These two domains are linked by a central stalk (subunits gamma, delta, and epsilon) rotating inside the F1 region and a stationary peripheral stalk (subunits F6, b, d, and OSCP). Interacts with PRICKLE3.

The protein localises to the mitochondrion membrane. Subunit 8, of the mitochondrial membrane ATP synthase complex (F(1)F(0) ATP synthase or Complex V) that produces ATP from ADP in the presence of a proton gradient across the membrane which is generated by electron transport complexes of the respiratory chain. ATP synthase complex consist of a soluble F(1) head domain - the catalytic core - and a membrane F(1) domain - the membrane proton channel. These two domains are linked by a central stalk rotating inside the F(1) region and a stationary peripheral stalk. During catalysis, ATP synthesis in the catalytic domain of F(1) is coupled via a rotary mechanism of the central stalk subunits to proton translocation. In vivo, can only synthesize ATP although its ATP hydrolase activity can be activated artificially in vitro. Part of the complex F(0) domain. This chain is ATP synthase F(0) complex subunit 8, found in Mammuthus primigenius (Siberian woolly mammoth).